The following is a 364-amino-acid chain: Methylthioribose-1-phosphate isomerase (364 aa).

Residues 53–55 (RGA), Arg90, and Gln200 each bind substrate. The Proton donor role is filled by Asp241. Residue 251–252 (NK) participates in substrate binding.

The protein belongs to the eIF-2B alpha/beta/delta subunits family. MtnA subfamily.

The enzyme catalyses 5-(methylsulfanyl)-alpha-D-ribose 1-phosphate = 5-(methylsulfanyl)-D-ribulose 1-phosphate. Its pathway is amino-acid biosynthesis; L-methionine biosynthesis via salvage pathway; L-methionine from S-methyl-5-thio-alpha-D-ribose 1-phosphate: step 1/6. Catalyzes the interconversion of methylthioribose-1-phosphate (MTR-1-P) into methylthioribulose-1-phosphate (MTRu-1-P). In Methylobacterium nodulans (strain LMG 21967 / CNCM I-2342 / ORS 2060), this protein is Methylthioribose-1-phosphate isomerase.